The following is a 324-amino-acid chain: Putative GTPase PYRAB02490 (324 aa).

GTP-binding positions include 52-60 (GPPGAGKST), Asp-194, and 229-231 (VAT).

The protein belongs to the SIMIBI class G3E GTPase family. ArgK/MeaB subfamily.

Its function is as follows. May have GTPase activity. May also bind and hydrolyze ATP. May function as chaperone. This Pyrococcus abyssi (strain GE5 / Orsay) protein is Putative GTPase PYRAB02490.